The chain runs to 243 residues: Adenosylcobinamide-GDP ribazoletransferase (243 aa).

Helical transmembrane passes span 31–51, 57–77, 109–129, 135–155, and 188–208; these read LLFYPLVGVVFGMLLLGFSAL, LMLHAALVLSAWVLLSGGLHL, IAVVTLVLVLLLKFAAILALI, IGLLLAPVIGRAAMLGLFLGT, and VLLAGWSGVAVLLVCAVCFFW.

Belongs to the CobS family. Mg(2+) is required as a cofactor.

The protein localises to the cell inner membrane. It carries out the reaction alpha-ribazole + adenosylcob(III)inamide-GDP = adenosylcob(III)alamin + GMP + H(+). The enzyme catalyses alpha-ribazole 5'-phosphate + adenosylcob(III)inamide-GDP = adenosylcob(III)alamin 5'-phosphate + GMP + H(+). It participates in cofactor biosynthesis; adenosylcobalamin biosynthesis; adenosylcobalamin from cob(II)yrinate a,c-diamide: step 7/7. Functionally, joins adenosylcobinamide-GDP and alpha-ribazole to generate adenosylcobalamin (Ado-cobalamin). Also synthesizes adenosylcobalamin 5'-phosphate from adenosylcobinamide-GDP and alpha-ribazole 5'-phosphate. This Pseudomonas savastanoi pv. phaseolicola (strain 1448A / Race 6) (Pseudomonas syringae pv. phaseolicola (strain 1448A / Race 6)) protein is Adenosylcobinamide-GDP ribazoletransferase.